We begin with the raw amino-acid sequence, 366 residues long: Protein RecA (366 aa).

81–88 serves as a coordination point for ATP; the sequence is GPESSGKT.

The protein belongs to the RecA family.

The protein localises to the cytoplasm. Can catalyze the hydrolysis of ATP in the presence of single-stranded DNA, the ATP-dependent uptake of single-stranded DNA by duplex DNA, and the ATP-dependent hybridization of homologous single-stranded DNAs. It interacts with LexA causing its activation and leading to its autocatalytic cleavage. The chain is Protein RecA from Leptospira interrogans serogroup Icterohaemorrhagiae serovar copenhageni (strain Fiocruz L1-130).